We begin with the raw amino-acid sequence, 395 residues long: General transcription factor IIH subunit 2 (395 aa).

A VWFA domain is found at 60 to 236 (HLYVVVDGSR…HYKELLTHHV (177 aa)). Phosphotyrosine is present on Tyr-95. The C4-type zinc-finger motif lies at 291–308 (CPQCRAKYCELPVECKIC).

This sequence belongs to the GTF2H2 family. Component of the TFIID-containing RNA polymerase II pre-initiation complex that is composed of TBP and at least GTF2A1, GTF2A2, GTF2E1, GTF2E2, GTF2F1, GTF2H2, GTF2H3, GTF2H4, GTF2H5, GTF2B, TCEA1, ERCC2 and ERCC3. Component of the 7-subunit TFIIH core complex composed of XPB/ERCC3, XPD/ERCC2, GTF2H1, GTF2H2, GTF2H3, GTF2H4 and GTF2H5, which is active in NER. The core complex associates with the 3-subunit CDK-activating kinase (CAK) module composed of CCNH/cyclin H, CDK7 and MNAT1 to form the 10-subunit holoenzyme (holo-TFIIH) active in transcription. Interacts with XPB, XPD, GTF2H1 and GTF2H3.

It localises to the nucleus. Component of the general transcription and DNA repair factor IIH (TFIIH) core complex, which is involved in general and transcription-coupled nucleotide excision repair (NER) of damaged DNA and, when complexed to CAK, in RNA transcription by RNA polymerase II. In NER, TFIIH acts by opening DNA around the lesion to allow the excision of the damaged oligonucleotide and its replacement by a new DNA fragment. In transcription, TFIIH has an essential role in transcription initiation. When the pre-initiation complex (PIC) has been established, TFIIH is required for promoter opening and promoter escape. Phosphorylation of the C-terminal tail (CTD) of the largest subunit of RNA polymerase II by the kinase module CAK controls the initiation of transcription. The N-terminus of GTF2H2 interacts with and regulates XPD whereas an intact C-terminus is required for a successful escape of RNAP II form the promoter. The protein is General transcription factor IIH subunit 2 (GTF2H2) of Bos taurus (Bovine).